The sequence spans 667 residues: DNA ligase (667 aa).

Residues aspartate 30–aspartate 34, serine 79–leucine 80, and glutamate 112 contribute to the NAD(+) site. The active-site N6-AMP-lysine intermediate is lysine 114. NAD(+) is bound by residues arginine 135, glutamate 172, lysine 289, and lysine 313. Cysteine 407, cysteine 410, cysteine 425, and cysteine 431 together coordinate Zn(2+). Residues valine 590–alanine 667 form the BRCT domain.

It belongs to the NAD-dependent DNA ligase family. LigA subfamily. The cofactor is Mg(2+). Mn(2+) serves as cofactor.

The enzyme catalyses NAD(+) + (deoxyribonucleotide)n-3'-hydroxyl + 5'-phospho-(deoxyribonucleotide)m = (deoxyribonucleotide)n+m + AMP + beta-nicotinamide D-nucleotide.. In terms of biological role, DNA ligase that catalyzes the formation of phosphodiester linkages between 5'-phosphoryl and 3'-hydroxyl groups in double-stranded DNA using NAD as a coenzyme and as the energy source for the reaction. It is essential for DNA replication and repair of damaged DNA. This chain is DNA ligase, found in Histophilus somni (strain 2336) (Haemophilus somnus).